The chain runs to 30 residues: Conotoxin TVIIA (30 aa).

3 disulfide bridges follow: C2–C14, C9–C19, and C13–C24. Residues P10 and P11 each carry the 4-hydroxyproline modification.

Three different forms of TVIIA exist. Pro-10 and Pro-11 of conotoxin TVIIA are hydroxylated in TVIIA, whereas Pro-10 is not hydroxylated in [Pro10]TVIIA and neither Pro-10 nor Pro-11 are hydroxylated in [Pro10,11]TVIIA. Expressed by the venom duct.

Its subcellular location is the secreted. In terms of biological role, by structural similarity with conotoxin GS, may inhibit the sodium channel (Nav). No effect was observed upon intracranial injections into mice and intraperitoneal injections into goldfish (25 ug). This chain is Conotoxin TVIIA, found in Conus tulipa (Fish-hunting cone snail).